A 104-amino-acid chain; its full sequence is L-rhamnose mutarotase (104 aa).

Residue tyrosine 18 participates in substrate binding. Catalysis depends on histidine 22, which acts as the Proton donor. Substrate-binding positions include tyrosine 41 and 76 to 77 (WW).

This sequence belongs to the rhamnose mutarotase family. Homodimer.

It is found in the cytoplasm. The enzyme catalyses alpha-L-rhamnose = beta-L-rhamnose. Its pathway is carbohydrate metabolism; L-rhamnose metabolism. Its function is as follows. Involved in the anomeric conversion of L-rhamnose. This Clostridium beijerinckii (strain ATCC 51743 / NCIMB 8052) (Clostridium acetobutylicum) protein is L-rhamnose mutarotase.